A 240-amino-acid chain; its full sequence is Caffeoyl-CoA O-methyltransferase 5 (240 aa).

Lys14 is a substrate binding site. Residues Thr56, Glu78, 80–81, Ser86, Asp104, and Ala133 contribute to the S-adenosyl-L-methionine site; that span reads GV. Asp156 contacts substrate. An a divalent metal cation-binding site is contributed by Asp156. Asp158 serves as a coordination point for S-adenosyl-L-methionine. The a divalent metal cation site is built by Asp182 and Asn183. Residue Asn187 coordinates substrate.

It belongs to the class I-like SAM-binding methyltransferase superfamily. Cation-dependent O-methyltransferase family. CCoAMT subfamily. The cofactor is Mg(2+). Expression steadily increases from the bottom to the top of the plant.

It catalyses the reaction (E)-caffeoyl-CoA + S-adenosyl-L-methionine = (E)-feruloyl-CoA + S-adenosyl-L-homocysteine + H(+). Its pathway is aromatic compound metabolism; phenylpropanoid biosynthesis. Its function is as follows. Methylates caffeoyl-CoA to feruloyl-CoA and 5-hydroxyferuloyl-CoA to sinapoyl-CoA. Plays a role in the synthesis of feruloylated polysaccharides. Involved in the reinforcement of the plant cell wall. Also involved in the responding to wounding or pathogen challenge by the increased formation of cell wall-bound ferulic acid polymers. Methylates 5-hydroxyferulolyl-CoA more efficiently than caffeoyl-CoA. The chain is Caffeoyl-CoA O-methyltransferase 5 (CCOAOMT5) from Nicotiana tabacum (Common tobacco).